Consider the following 545-residue polypeptide: MAAKDVVYSDVARNELLAGVEKLADAVRVTMGPKGRNVLLQRSFGAPHITKDGVSVAKEIELKHPVENMGAQLVKEVASKTADEAGDGTTTATVLAHAVFKEGLKYITAGANPVAVKRGMDKAVEAIIAELKKMSKTVENKEQIAQVATISANNDKKIGELIAEAMDKVGKDGVITVEEGKSLQDELEVVEGMQFDRGYLSPYFVTDTEKMVAELNDAYILLYDKKISNMKDLLPLLEQMVQAGNKPLLIIAEDIEGEALATLVVNKLRGVLNVCAVKAPGFGDRRKAMLQDIAILTGGQVISEELGRTLESATLADLGQAGRVVVDKENTTIVDGRGDKAAIEARIAQIKKEIEETTSDYDREKLQERLAKLSGGVAVIKVGAATETEMKEKKDRVDDALSATKAAVEEGIVIGGGAAILKAAKNISVNVEDADEKIGVDIVKQAVKAPIKQIAKNAGFEPGIVAMKVEEADENTGFNAATGEYVDMFKAGIIDPTKVERIALQNAVSVGSLLLTTEAAVTEVPEDKPAPAAPDMGGMGGMGMM.

ATP is bound by residues 30–33 (TMGP), Lys-51, 87–91 (DGTTT), Gly-416, 479–481 (NAA), and Asp-495.

This sequence belongs to the chaperonin (HSP60) family. In terms of assembly, forms a cylinder of 14 subunits composed of two heptameric rings stacked back-to-back. Interacts with the co-chaperonin GroES.

It localises to the cytoplasm. It catalyses the reaction ATP + H2O + a folded polypeptide = ADP + phosphate + an unfolded polypeptide.. Its function is as follows. Together with its co-chaperonin GroES, plays an essential role in assisting protein folding. The GroEL-GroES system forms a nano-cage that allows encapsulation of the non-native substrate proteins and provides a physical environment optimized to promote and accelerate protein folding. The protein is Chaperonin GroEL of Nautilia profundicola (strain ATCC BAA-1463 / DSM 18972 / AmH).